Consider the following 121-residue polypeptide: Autophagy-related protein 8 (121 aa).

G116 carries Phosphatidylethanolamine amidated glycine lipidation. The propeptide at 117-121 (DFETA) is removed in mature form.

This sequence belongs to the ATG8 family. Post-translationally, the C-terminal 5 residues are removed to expose Gly-116 at the C-terminus. The C-terminal Gly is then amidated with phosphatidylethanolamine by an activating system similar to that for ubiquitin.

It localises to the cytoplasmic vesicle. The protein resides in the autophagosome membrane. Its subcellular location is the vacuole membrane. In terms of biological role, ubiquitin-like modifier involved in autophagosome formation. With cpr-1/atg4, mediates the delivery of the autophagosomes to the vacuole via the microtubule cytoskeleton. Required for selective autophagic degradation of the nucleus (nucleophagy) as well as for mitophagy which contributes to regulate mitochondrial quantity and quality by eliminating the mitochondria to a basal level to fulfill cellular energy requirements and preventing excess ROS production. Also participates in membrane fusion events that take place in the early secretory pathway. Also involved in endoplasmic reticulum-specific autophagic process and is essential for the survival of cells subjected to severe ER stress. The apg-6/atg8-PE conjugate mediates tethering between adjacent membranes and stimulates membrane hemifusion, leading to expansion of the autophagosomal membrane during autophagy. The sequence is that of Autophagy-related protein 8 (apg-6) from Neurospora crassa (strain ATCC 24698 / 74-OR23-1A / CBS 708.71 / DSM 1257 / FGSC 987).